We begin with the raw amino-acid sequence, 1220 residues long: ATP-dependent helicase/nuclease subunit A (1220 aa).

The UvrD-like helicase ATP-binding domain maps to 9–473; it reads VIWTDDQWKS…IDLSQNFRSR (465 aa). ATP is bound at residue 30–37; the sequence is AAAGSGKT. The region spanning 474–782 is the UvrD-like helicase C-terminal domain; it reads PEVLSTTNYL…RMMTIHASKG (309 aa).

Belongs to the helicase family. AddA subfamily. As to quaternary structure, heterodimer of AddA and AddB/RexB. Requires Mg(2+) as cofactor.

It catalyses the reaction Couples ATP hydrolysis with the unwinding of duplex DNA by translocating in the 3'-5' direction.. The enzyme catalyses ATP + H2O = ADP + phosphate + H(+). Functionally, the heterodimer acts as both an ATP-dependent DNA helicase and an ATP-dependent, dual-direction single-stranded exonuclease. Recognizes the chi site generating a DNA molecule suitable for the initiation of homologous recombination. The AddA nuclease domain is required for chi fragment generation; this subunit has the helicase and 3' -&gt; 5' nuclease activities. In Staphylococcus carnosus (strain TM300), this protein is ATP-dependent helicase/nuclease subunit A.